The sequence spans 529 residues: Lysine--tRNA ligase (529 aa).

A 'HIGH' region motif is present at residues 29–37 (ISGSVHIGN). Positions 274-278 (AMSKS) match the 'KMSKS' region motif. Lysine 277 lines the ATP pocket.

The protein belongs to the class-I aminoacyl-tRNA synthetase family.

It localises to the cytoplasm. The enzyme catalyses tRNA(Lys) + L-lysine + ATP = L-lysyl-tRNA(Lys) + AMP + diphosphate. In Methanosphaera stadtmanae (strain ATCC 43021 / DSM 3091 / JCM 11832 / MCB-3), this protein is Lysine--tRNA ligase.